A 159-amino-acid chain; its full sequence is Anaerobic nitrite reductase HB2 (159 aa).

In terms of domain architecture, Globin spans Gly-2–Lys-152. The Homodimerization signature appears at Glu-35–Gly-39. 4 residues coordinate heme b: Ser-45, Lys-59, His-63, and His-98. Residues Asp-105–Arg-117 carry the Homodimerization motif.

Belongs to the plant globin family. In terms of assembly, homodimer. Heme b is required as a cofactor.

It localises to the cytoplasm. It is found in the nucleus. It catalyses the reaction Fe(III)-heme b-[protein] + nitric oxide + H2O = Fe(II)-heme b-[protein] + nitrite + 2 H(+). In terms of biological role, phytoglobin that reduces nitrite to nitric oxide (NO) under anoxic conditions (e.g. during flooding or in waterlogged soil). May not function as an oxygen storage or transport protein. Has an unusually high affinity for O(2) through an hexacoordinate heme iron because of a very low dissociation constant. In Gossypium hirsutum (Upland cotton), this protein is Anaerobic nitrite reductase HB2.